Here is a 338-residue protein sequence, read N- to C-terminus: Methionine import ATP-binding protein MetN 1 (338 aa).

Residues 2–241 enclose the ABC transporter domain; the sequence is IQLENIEKHY…PNEKLTKDFI (240 aa). 38–45 provides a ligand contact to ATP; that stretch reads GYSGAGKS.

Belongs to the ABC transporter superfamily. Methionine importer (TC 3.A.1.24) family. The complex is composed of two ATP-binding proteins (MetN), two transmembrane proteins (MetI) and a solute-binding protein (MetQ).

It is found in the cell membrane. It carries out the reaction L-methionine(out) + ATP + H2O = L-methionine(in) + ADP + phosphate + H(+). The enzyme catalyses D-methionine(out) + ATP + H2O = D-methionine(in) + ADP + phosphate + H(+). Part of the ABC transporter complex MetNIQ involved in methionine import. Responsible for energy coupling to the transport system. The polypeptide is Methionine import ATP-binding protein MetN 1 (Oceanobacillus iheyensis (strain DSM 14371 / CIP 107618 / JCM 11309 / KCTC 3954 / HTE831)).